The chain runs to 350 residues: Small ribosomal subunit biogenesis GTPase RsgA (350 aa).

Positions 1–17 (MSKNKLSKGQQRRVNAN) are enriched in polar residues. Residues 1–27 (MSKNKLSKGQQRRVNANHQRRLKTSAE) form a disordered region. Positions 104–273 (TSVLTRPDFY…VIDSPGVREF (170 aa)) constitute a CP-type G domain. GTP contacts are provided by residues 160 to 163 (NKID) and 214 to 222 (GQSGVGKSS). Positions 297, 302, 304, and 310 each coordinate Zn(2+).

This sequence belongs to the TRAFAC class YlqF/YawG GTPase family. RsgA subfamily. As to quaternary structure, monomer. Associates with 30S ribosomal subunit, binds 16S rRNA. The cofactor is Zn(2+).

It is found in the cytoplasm. Functionally, one of several proteins that assist in the late maturation steps of the functional core of the 30S ribosomal subunit. Helps release RbfA from mature subunits. May play a role in the assembly of ribosomal proteins into the subunit. Circularly permuted GTPase that catalyzes slow GTP hydrolysis, GTPase activity is stimulated by the 30S ribosomal subunit. In Salmonella dublin (strain CT_02021853), this protein is Small ribosomal subunit biogenesis GTPase RsgA.